A 477-amino-acid chain; its full sequence is MDGFYDQQVPYMVTNNQRGRNCNEKPTNVRKRKFINRDLAHDSEELFQDLSQLQETWLAEAQVPDNDEQFVPDYQAESLAFHGLPLKIKKEPHSPCSELGSACSQEQPFKFSYGEKCLYNVSAYDQKPQVGMRPSNPPTPSSTPVSPLHHASPNSAHTSKPDRAFPAHLPPSQPIQDSSYPMDHRFRRQLSEPCNSFPPLPTMPREGRPMYQRQMSEPNIPFPPQGFKQEYHDPVYEHNTMVGGAASQSFPPPLMIKQEPRDFAYDSEVPSCHSIYMRQEGFLTHPSRTEGCMFEKGPRQFYDDTCVVPEKFDGDIKQEPGMYREGPTYQRRGSLQLWQFLVALLDDPSNSHFIAWTGRGMEFKLIEPEEVARRWGIQKNRPAMNYDKLSRSLRYYYEKGIMQKVAGERYVYKFVCDPEALFSMAFPDNQRPLLKTDMERHINEEDTVPLSHFDESMAYMPEGGCCNPHPYNEGYVY.

Ser-94 is modified (phosphoserine). The disordered stretch occupies residues 128–178 (PQVGMRPSNPPTPSSTPVSPLHHASPNSAHTSKPDRAFPAHLPPSQPIQDS). 2 positions are modified to phosphoserine; by RPS6KA1 and RPS6KA5: Ser-191 and Ser-216. Residue Lys-317 forms a Glycyl lysine isopeptide (Lys-Gly) (interchain with G-Cter in SUMO2) linkage. The ETS DNA-binding region spans 335-415 (LQLWQFLVAL…AGERYVYKFV (81 aa)).

It belongs to the ETS family. Sumoylated. Post-translationally, phosphorylated at Ser-191 and Ser-216 by RPS6KA1 and RPS6KA5; phosphorylation activates transcriptional activity.

It is found in the nucleus. Transcriptional activator that binds to DNA sequences containing the consensus pentanucleotide 5'-CGGA[AT]-3'. Required for olfactory dopaminergic neuron differentiation; may directly activate expression of tyrosine hydroxylase (TH). The polypeptide is ETS translocation variant 1 (ETV1) (Bos taurus (Bovine)).